We begin with the raw amino-acid sequence, 427 residues long: Histidine--tRNA ligase (427 aa).

It belongs to the class-II aminoacyl-tRNA synthetase family. As to quaternary structure, homodimer.

The protein localises to the cytoplasm. It carries out the reaction tRNA(His) + L-histidine + ATP = L-histidyl-tRNA(His) + AMP + diphosphate + H(+). The polypeptide is Histidine--tRNA ligase (Mannheimia succiniciproducens (strain KCTC 0769BP / MBEL55E)).